The following is a 491-amino-acid chain: Dipeptide and tripeptide permease B (491 aa).

At 1-26 (MNNTAPGLLHQPKPFFMIFFVELWER) the chain is on the cytoplasmic side. Residues 27-47 (FGYYGVQGILAVFFVKQLGFS) traverse the membrane as a helical segment. Residues 48 to 51 (QEQA) lie on the Periplasmic side of the membrane. The chain crosses the membrane as a helical span at residues 52–72 (FITFGAFAALVYGLISIGGYV). The Cytoplasmic portion of the chain corresponds to 73–81 (GDHLLGTKR). Residues 82–102 (TMVLGAIVLALGYFMTGMSLL) traverse the membrane as a helical segment. The Periplasmic segment spans residues 103 to 105 (KPE). A helical transmembrane segment spans residues 106–126 (MIFIALGTIAVGNGLFKANPA). Topologically, residues 127–145 (SLLSKCYPPKDPRLDGAFT) are cytoplasmic. The helical transmembrane segment at 146–166 (LFYMSINIGSLLSLSLAPIIA) threads the bilayer. Over 167–171 (ERFGY) the chain is Periplasmic. A helical transmembrane segment spans residues 172–192 (AVTYNLCGLGLIIALLVYFAC). The Cytoplasmic portion of the chain corresponds to 193-210 (RGMVRSIGSAPDHQPLNY). A helical transmembrane segment spans residues 211 to 231 (GKLLLVLAGAVVMIFLCAWLM). Residue histidine 232 is a topological domain, periplasmic. Residues 233–253 (NVGVANIVLIAVSAVVLYFFF) traverse the membrane as a helical segment. Over 254–266 (REAFKQDKTGRNR) the chain is Cytoplasmic. Residues 267 to 287 (MFVAFILMIEAVLFYILYAQM) traverse the membrane as a helical segment. The Periplasmic portion of the chain corresponds to 288 to 312 (PTSLNFFAINNVRHELLGFAINPVS). Residues 313-335 (FQALNPFWVVVASPILASIYTRL) form a helical membrane-spanning segment. At 336 to 349 (GSRGRDMTMPTKFT) the chain is on the cytoplasmic side. A helical transmembrane segment spans residues 350-370 (LGMLLCSLGFLTAAAAGMWFA). Over 371 to 378 (DAQGLTSP) the chain is Periplasmic. A helical membrane pass occupies residues 379-399 (WFVVLVYLFQSLGELMISALG). The Cytoplasmic portion of the chain corresponds to 400 to 423 (LAMVAALVPQYLMGFILGMWFLTQ). A helical transmembrane segment spans residues 424 to 444 (AAAFLLGGYVATFTAVPAGIH). Residues 445 to 454 (DPLQTLPIYT) lie on the Periplasmic side of the membrane. The helical transmembrane segment at 455 to 475 (GVFGKIGIATLIVTLVMAAMV) threads the bilayer. Residues 476 to 491 (PWLNRMMNTPADGQKA) are Cytoplasmic-facing.

The protein belongs to the major facilitator superfamily. Proton-dependent oligopeptide transporter (POT/PTR) (TC 2.A.17) family. DtpB subfamily.

It localises to the cell inner membrane. Proton-dependent permease that transports di- and tripeptides. This chain is Dipeptide and tripeptide permease B, found in Edwardsiella piscicida.